Here is a 123-residue protein sequence, read N- to C-terminus: Galanin peptides (123 aa).

A signal peptide spans 1–19; the sequence is MARGSALLLASLLLAAALS. The propeptide occupies 20–30; sequence ASAGLWSPAKE. The disordered stretch occupies residues 46–80; sequence HAVGNHRSFSDKNGLTSKRELRPEDDMKPGSFDRS. Basic and acidic residues predominate over residues 62-73; the sequence is SKRELRPEDDMK. Phosphoserine occurs at positions 116 and 117.

Belongs to the galanin family.

The protein localises to the secreted. Its function is as follows. Endocrine hormone of the central and peripheral nervous systems that binds and activates the G protein-coupled receptors GALR1, GALR2, and GALR3. This small neuropeptide may regulate diverse physiologic functions including contraction of smooth muscle of the gastrointestinal and genitourinary tract, growth hormone and insulin release and adrenal secretion. This chain is Galanin peptides (GAL), found in Homo sapiens (Human).